The following is an 812-amino-acid chain: Hyaluronate lyase HylB (812 aa).

Residues 1 to 32 (MFGTPSRRTFLTASALSAMALAASPTVTDAIA) constitute a signal peptide (tat-type signal). Active-site residues include Asn222, His272, and Tyr281.

This sequence belongs to the polysaccharide lyase 8 family. Post-translationally, predicted to be exported by the Tat system. The position of the signal peptide cleavage has been experimentally proven.

It localises to the secreted. It catalyses the reaction [hyaluronan](n) = n 3-(4-deoxy-beta-D-gluc-4-enuronosyl)-N-acetyl-D-glucosamine + H2O. In terms of biological role, degrades hyaluronic acid (HA) exclusively into HA disaccharides (HA-2). Produced HA-2s confer anti-inflammatory properties leading to reduced immunopathology in the mouse model of acne. In Cutibacterium acnes (Propionibacterium acnes), this protein is Hyaluronate lyase HylB.